The chain runs to 435 residues: Shikimate O-hydroxycinnamoyltransferase (435 aa).

Active-site proton acceptor residues include His-153 and Asp-382.

Belongs to the plant acyltransferase family. As to expression, highly expressed in stem vascular tissues.

It carries out the reaction shikimate + 4-coumaroyl-CoA = trans-4-coumaroylshikimate + CoA. Its function is as follows. Acyltransferase involved in the biosynthesis of lignin. The affinity for shikimate as acceptor is 100-fold higher than for quinate. The most efficient donors are caffeoyl-CoA &gt; p-coumaroyl-CoA &gt; feruloyl-CoA &gt;&gt; sinapoyl-CoA. The chain is Shikimate O-hydroxycinnamoyltransferase (HST) from Nicotiana tabacum (Common tobacco).